We begin with the raw amino-acid sequence, 714 residues long: Ribonucleoside-diphosphate reductase 2 subunit alpha (714 aa).

Residues T161, 177 to 178 (SC), G206, 386 to 390 (NLCSE), and 588 to 592 (PTGSI) contribute to the substrate site. A disulfide bond links C178 and C415. N386 functions as the Proton acceptor in the catalytic mechanism. C388 functions as the Cysteine radical intermediate in the catalytic mechanism. Residue E390 is the Proton acceptor of the active site.

It belongs to the ribonucleoside diphosphate reductase large chain family. As to quaternary structure, tetramer of two alpha and two beta subunits.

The enzyme catalyses a 2'-deoxyribonucleoside 5'-diphosphate + [thioredoxin]-disulfide + H2O = a ribonucleoside 5'-diphosphate + [thioredoxin]-dithiol. Its activity is regulated as follows. Under complex allosteric control mediated by deoxynucleoside triphosphates and ATP binding. The type of nucleotide bound at the specificity site determines substrate preference. It seems probable that ATP makes the enzyme reduce CDP and UDP, dGTP favors ADP reduction and dTTP favors GDP reduction. Lacks the N-terminal activity site. Provides the precursors necessary for DNA synthesis. Catalyzes the biosynthesis of deoxyribonucleotides from the corresponding ribonucleotides. R1E contains the binding sites for both substrates and allosteric effectors and carries out the actual reduction of the ribonucleotide. This chain is Ribonucleoside-diphosphate reductase 2 subunit alpha (nrdE), found in Salmonella typhimurium (strain LT2 / SGSC1412 / ATCC 700720).